The primary structure comprises 442 residues: Chromosomal replication initiator protein DnaA (442 aa).

Residues 1 to 75 (MDAWPRCLER…GNGEVALAVG (75 aa)) are domain I, interacts with DnaA modulators. The tract at residues 75-104 (GSRPRAPEPLPAPQAVASAPAAAPIVPFAG) is domain II. The tract at residues 105-322 (NLDSHYTFAN…GALNTLVARA (218 aa)) is domain III, AAA+ region. 4 residues coordinate ATP: glycine 150, glycine 152, lysine 153, and threonine 154. The segment at 323 to 442 (NFTGRSITVE…WEKLIRKLSE (120 aa)) is domain IV, binds dsDNA.

This sequence belongs to the DnaA family. Oligomerizes as a right-handed, spiral filament on DNA at oriC.

It is found in the cytoplasm. Plays an essential role in the initiation and regulation of chromosomal replication. ATP-DnaA binds to the origin of replication (oriC) to initiate formation of the DNA replication initiation complex once per cell cycle. Binds the DnaA box (a 9 base pair repeat at the origin) and separates the double-stranded (ds)DNA. Forms a right-handed helical filament on oriC DNA; dsDNA binds to the exterior of the filament while single-stranded (ss)DNA is stabiized in the filament's interior. The ATP-DnaA-oriC complex binds and stabilizes one strand of the AT-rich DNA unwinding element (DUE), permitting loading of DNA polymerase. After initiation quickly degrades to an ADP-DnaA complex that is not apt for DNA replication. Binds acidic phospholipids. In Xanthomonas campestris pv. campestris (strain B100), this protein is Chromosomal replication initiator protein DnaA.